The chain runs to 284 residues: 4-hydroxybenzoate octaprenyltransferase (284 aa).

8 helical membrane-spanning segments follow: residues proline 18–glycine 38, tryptophan 42–isoleucine 62, isoleucine 93–leucine 113, histidine 136–alanine 156, leucine 161–threonine 181, leucine 209–tyrosine 229, glutamine 233–isoleucine 253, and alanine 264–tryptophan 284.

Belongs to the UbiA prenyltransferase family. Mg(2+) serves as cofactor.

It is found in the cell inner membrane. It catalyses the reaction all-trans-octaprenyl diphosphate + 4-hydroxybenzoate = 4-hydroxy-3-(all-trans-octaprenyl)benzoate + diphosphate. Its pathway is cofactor biosynthesis; ubiquinone biosynthesis. In terms of biological role, catalyzes the prenylation of para-hydroxybenzoate (PHB) with an all-trans polyprenyl group. Mediates the second step in the final reaction sequence of ubiquinone-8 (UQ-8) biosynthesis, which is the condensation of the polyisoprenoid side chain with PHB, generating the first membrane-bound Q intermediate 3-octaprenyl-4-hydroxybenzoate. The sequence is that of 4-hydroxybenzoate octaprenyltransferase from Vibrio vulnificus (strain CMCP6).